Here is a 165-residue protein sequence, read N- to C-terminus: MKVDSSEAVYAGMKDAGIDFAVSVPCVNLRTVLEMVDADPAIMHVPVTREEEGFGVAAGAHMAGKTTAILMQNSGLGNSVNVLASLYSLYHIPITMIVSHRGTEGEFMEAQVPMGRATGDILRILEIPFRTPRSPAEARESIGELTDISLRTSKAVAVLLDVSYW.

This sequence belongs to the ComD family. Heterododecamer composed of 6 subunits alpha and 6 subunits beta.

It catalyses the reaction 3-sulfopyruvate + H(+) = sulfoacetaldehyde + CO2. It participates in cofactor biosynthesis; coenzyme M biosynthesis; sulfoacetaldehyde from phosphoenolpyruvate and sulfite: step 4/4. In terms of biological role, involved in the biosynthesis of the coenzyme M (2-mercaptoethanesulfonic acid). Catalyzes the decarboxylation of sulfopyruvate to sulfoacetaldehyde. This chain is Sulfopyruvate decarboxylase subunit alpha, found in Methanothermobacter thermautotrophicus (strain ATCC 29096 / DSM 1053 / JCM 10044 / NBRC 100330 / Delta H) (Methanobacterium thermoautotrophicum).